The primary structure comprises 466 residues: ATP synthase subunit beta (466 aa).

Gly-156–Thr-163 is a binding site for ATP.

The protein belongs to the ATPase alpha/beta chains family. As to quaternary structure, F-type ATPases have 2 components, CF(1) - the catalytic core - and CF(0) - the membrane proton channel. CF(1) has five subunits: alpha(3), beta(3), gamma(1), delta(1), epsilon(1). CF(0) has three main subunits: a(1), b(2) and c(9-12). The alpha and beta chains form an alternating ring which encloses part of the gamma chain. CF(1) is attached to CF(0) by a central stalk formed by the gamma and epsilon chains, while a peripheral stalk is formed by the delta and b chains.

It localises to the cell membrane. It carries out the reaction ATP + H2O + 4 H(+)(in) = ADP + phosphate + 5 H(+)(out). Produces ATP from ADP in the presence of a proton gradient across the membrane. The catalytic sites are hosted primarily by the beta subunits. The sequence is that of ATP synthase subunit beta from Polynucleobacter asymbioticus (strain DSM 18221 / CIP 109841 / QLW-P1DMWA-1) (Polynucleobacter necessarius subsp. asymbioticus).